The sequence spans 435 residues: Glutamyl-tRNA reductase (435 aa).

Substrate is bound by residues 49–52 (TCNR), S109, 114–116 (ETQ), and Q120. C50 acts as the Nucleophile in catalysis. 189-194 (GAGEMS) lines the NADP(+) pocket.

Belongs to the glutamyl-tRNA reductase family. As to quaternary structure, homodimer.

The catalysed reaction is (S)-4-amino-5-oxopentanoate + tRNA(Glu) + NADP(+) = L-glutamyl-tRNA(Glu) + NADPH + H(+). It participates in porphyrin-containing compound metabolism; protoporphyrin-IX biosynthesis; 5-aminolevulinate from L-glutamyl-tRNA(Glu): step 1/2. In terms of biological role, catalyzes the NADPH-dependent reduction of glutamyl-tRNA(Glu) to glutamate 1-semialdehyde (GSA). The chain is Glutamyl-tRNA reductase from Listeria innocua serovar 6a (strain ATCC BAA-680 / CLIP 11262).